A 553-amino-acid polypeptide reads, in one-letter code: Keratin, type II cytoskeletal 6A (553 aa).

Positions 1-20 are enriched in polar residues; it reads MSTKTTIKSQTSHRGYSASS. A disordered region spans residues 1–21; the sequence is MSTKTTIKSQTSHRGYSASSA. Residues 1 to 151 are head; it reads MSTKTTIKSQ…DPTIQRVRTE (151 aa). The segment at 152-187 is coil 1A; it reads EREQIKTLNNKFASFIDKVRFLEQQNKVLDTKWALL. The IF rod domain occupies 152–465; it reads EREQIKTLNN…KLLEGEECRL (314 aa). The interval 188 to 206 is linker 1; sequence QEQGTKTVRQNLEPMFEQY. The segment at 207 to 298 is coil 1B; the sequence is ISNLRRQLDS…ALYEAELSQM (92 aa). The segment at 299-322 is linker 12; it reads QTHISDTSVVLSMDNNRSLDLDSI. The tract at residues 323 to 461 is coil 2; it reads IAEVKAQYED…ATYRKLLEGE (139 aa). Residues 462–553 form a tail region; that stretch reads ECRLNGEGVG…TSSSKKSYRQ (92 aa). Residues 528–553 are disordered; the sequence is LSSSGGLSSSTIKYTTTSSSKKSYRQ. The span at 531–553 shows a compositional bias: low complexity; sequence SGGLSSSTIKYTTTSSSKKSYRQ.

The protein belongs to the intermediate filament family. As to quaternary structure, heterodimer of a type I and a type II keratin. KRT6 isomers associate with KRT16 and/or KRT17. Interacts with TCHP. Predominates in the adult trunk skin, tongue, trachea/esophagus and eye. In adult skin, localization is restricted to hair follicles, where it is localized predominantly in the outer root sheath.

Functionally, epidermis-specific type I keratin involved in wound healing. Involved in the activation of follicular keratinocytes after wounding, while it does not play a major role in keratinocyte proliferation or migration. Participates in the regulation of epithelial migration by inhibiting the activity of SRC during wound repair. The chain is Keratin, type II cytoskeletal 6A (Krt6a) from Mus musculus (Mouse).